Reading from the N-terminus, the 162-residue chain is Protein NrdI (162 aa).

This sequence belongs to the NrdI family.

Functionally, probably involved in ribonucleotide reductase function. This is Protein NrdI from Streptococcus pyogenes serotype M1.